A 511-amino-acid polypeptide reads, in one-letter code: GMP synthase [glutamine-hydrolyzing] (511 aa).

One can recognise a Glutamine amidotransferase type-1 domain in the interval 5–195; the sequence is DILVLDFGSQ…AKYACNCESV (191 aa). C82 (nucleophile) is an active-site residue. Active-site residues include H169 and E171. Positions 196–386 constitute a GMPS ATP-PPase domain; that stretch reads WNMGSFAKTQ…LGLSKEVVYR (191 aa). ATP is bound at residue 223–229; that stretch reads SGGVDSS.

As to quaternary structure, homodimer.

It carries out the reaction XMP + L-glutamine + ATP + H2O = GMP + L-glutamate + AMP + diphosphate + 2 H(+). It functions in the pathway purine metabolism; GMP biosynthesis; GMP from XMP (L-Gln route): step 1/1. Its function is as follows. Catalyzes the synthesis of GMP from XMP. The polypeptide is GMP synthase [glutamine-hydrolyzing] (Campylobacter jejuni subsp. doylei (strain ATCC BAA-1458 / RM4099 / 269.97)).